The chain runs to 192 residues: Superoxide dismutase [Fe] (192 aa).

Residues histidine 27, histidine 74, aspartate 157, and histidine 161 each contribute to the Fe cation site.

This sequence belongs to the iron/manganese superoxide dismutase family. In terms of assembly, homodimer. The cofactor is Fe cation.

The catalysed reaction is 2 superoxide + 2 H(+) = H2O2 + O2. Its function is as follows. Destroys superoxide anion radicals which are normally produced within the cells and which are toxic to biological systems. The polypeptide is Superoxide dismutase [Fe] (sodB) (Bordetella pertussis (strain Tohama I / ATCC BAA-589 / NCTC 13251)).